We begin with the raw amino-acid sequence, 130 residues long: uncharacterized protein (130 aa).

Positions 1 to 28 are disordered; sequence MELAKERNGPHQKHHGQCQNHCTSPNTV. Polar residues predominate over residues 17-28; the sequence is QCQNHCTSPNTV.

This is an uncharacterized protein from Saccharomyces cerevisiae (strain ATCC 204508 / S288c) (Baker's yeast).